The primary structure comprises 94 residues: Large ribosomal subunit protein eL33 (94 aa).

The protein belongs to the eukaryotic ribosomal protein eL33 family.

In Aeropyrum pernix (strain ATCC 700893 / DSM 11879 / JCM 9820 / NBRC 100138 / K1), this protein is Large ribosomal subunit protein eL33.